The chain runs to 1956 residues: Probable cation-transporting ATPase 1 (1956 aa).

At 1 to 35 the chain is on the cytoplasmic side; the sequence is MHLMCTGLRNEKLINDRKILYGECNLNIKSDSFII. A helical transmembrane segment spans residues 36-58; it reads LLFKEIMNPFFIFQIFAMIVWSL. Over 59 to 61 the chain is Extracellular; the sequence is DNY. The chain crosses the membrane as a helical span at residues 62 to 80; sequence IEYTISILFITSISIILEL. The Cytoplasmic portion of the chain corresponds to 81–407; that stretch reads KNTIKNQKKI…KKELNLINDS (327 aa). The chain crosses the membrane as a helical span at residues 408-427; it reads YKFLIILIIYALFSVFILLY. Residues 428 to 440 lie on the Extracellular side of the membrane; sequence ITLSNNEYTNHII. The chain crosses the membrane as a helical span at residues 441–462; sequence IKCLDIITDAIPPALPTTLTVG. At 463 to 1818 the chain is on the cytoplasmic side; sequence ISIAISRLKK…SLVNSFQLFK (1356 aa). Asp496 (4-aspartylphosphate intermediate) is an active-site residue. The segment at 901-938 is disordered; that stretch reads YGNNNDDNNDDDNNNDDDNNDDNNNDDNNNDDNNDDNN. Positions 907 to 935 are enriched in acidic residues; it reads DNNDDDNNNDDDNNDDNNNDDNNNDDNND. Mg(2+) contacts are provided by Asp1760 and Asp1764. The helical transmembrane segment at 1819–1837 threads the bilayer; it reads FISLYSIMQCSQVLILYSI. The Extracellular segment spans residues 1838-1845; that stretch reads SNKLTDNQ. A helical membrane pass occupies residues 1846–1863; that stretch reads YIFIDIVTILPLSIFMCW. The Cytoplasmic portion of the chain corresponds to 1864-1881; the sequence is TSASEKLSKNIPIGKLFS. A helical transmembrane segment spans residues 1882–1905; it reads FPILISIYGQIIIQLFFVMISLVV. Residues 1906 to 1928 lie on the Extracellular side of the membrane; that stretch reads LMNLSFYKYDKNKVMKEKSDDTY. A helical transmembrane segment spans residues 1929 to 1952; it reads LYKAQKYTLIYSLLFSKFVYVYIF. Over 1953–1956 the chain is Cytoplasmic; it reads KYKE.

This sequence belongs to the cation transport ATPase (P-type) (TC 3.A.3) family. Type V subfamily.

It is found in the membrane. It carries out the reaction ATP + H2O = ADP + phosphate + H(+). The polypeptide is Probable cation-transporting ATPase 1 (Plasmodium falciparum).